The primary structure comprises 582 residues: Vesicular glutamate transporter 2 (582 aa).

The Cytoplasmic segment spans residues Met1–Tyr71. Residues Ile72–Gly92 traverse the membrane as a helical segment. The Vesicular portion of the chain corresponds to Val93–Gly125. N-linked (GlcNAc...) asparagine glycans are attached at residues Asn100 and Asn101. A helical transmembrane segment spans residues Met126–Ala146. The Cytoplasmic segment spans residues Ser147–Arg148. A helical membrane pass occupies residues Leu149 to Ile169. Topologically, residues Pro170–Tyr177 are vesicular. A helical transmembrane segment spans residues Gly178–Cys198. Over His199 to Thr216 the chain is Cytoplasmic. The helical transmembrane segment at Thr217–Val237 threads the bilayer. Topologically, residues Gln238–Ser244 are vesicular. A helical membrane pass occupies residues Val245 to Tyr265. The Cytoplasmic portion of the chain corresponds to Glu266–Met310. A helical transmembrane segment spans residues Pro311–Ile331. Topologically, residues Ser332–Gly349 are vesicular. Residues Met350–Ala370 form a helical membrane-spanning segment. The Cytoplasmic portion of the chain corresponds to Asp371–Lys386. A helical transmembrane segment spans residues Ile387–His407. Topologically, residues Thr408–Arg409 are vesicular. A helical transmembrane segment spans residues Gly410–Phe430. Topologically, residues Asn431–Ser443 are cytoplasmic. A helical membrane pass occupies residues Ile444–Val464. At Gly465 to Gln477 the chain is on the vesicular side. Asn470 carries an N-linked (GlcNAc...) asparagine glycan. The helical transmembrane segment at Tyr478–Ala498 threads the bilayer. The Cytoplasmic segment spans residues Ser499 to Ser582.

It belongs to the major facilitator superfamily. Sodium/anion cotransporter family. VGLUT subfamily. As to expression, expressed in brain. Expressed in hippocampal neurons (at protein level).

The protein resides in the cytoplasmic vesicle. Its subcellular location is the secretory vesicle. It localises to the synaptic vesicle membrane. The protein localises to the synapse. It is found in the synaptosome. The protein resides in the cell membrane. It carries out the reaction L-glutamate(out) = L-glutamate(in). The enzyme catalyses K(+)(in) + H(+)(out) = K(+)(out) + H(+)(in). It catalyses the reaction 3 Na(+)(out) + phosphate(out) = 3 Na(+)(in) + phosphate(in). The catalysed reaction is phosphate(in) = phosphate(out). It carries out the reaction chloride(in) = chloride(out). Chloride channel activity is allosterically activated by lumenal H(+) and Cl(-) leading to synaptic vesicles acidification. The L-glutamate transport activity is allosterically activated by lumenal H(+) and Cl(-). The allosteric requirement for H(+) efficiently prevents non-vesicular efflux across the plasma membrane. The L-glutamate uniporter activity exhibits a biphasic dependence on chloride concentration. Functionally, multifunctional transporter that transports L-glutamate as well as multiple ions such as chloride, proton, potassium, sodium and phosphate. At the synaptic vesicle membrane, mainly functions as a uniporter which transports preferentially L-glutamate but also, phosphate from the cytoplasm into synaptic vesicles at presynaptic nerve terminals of excitatory neural cells. The L-glutamate or phosphate uniporter activity is electrogenic and is driven by the proton electrochemical gradient, mainly by the electrical gradient established by the vacuolar H(+)-ATPase across the synaptic vesicle membrane. In addition, functions as a chloride channel that allows a chloride permeation through the synaptic vesicle membrane therefore affects the proton electrochemical gradient and promotes synaptic vesicles acidification. Moreover, functions as a vesicular K(+)/H(+) antiport allowing to maintain the electrical gradient and to decrease chemical gradient and therefore sustain vesicular glutamate uptake. The vesicular H(+)/H(+) antiport activity is electroneutral. At the plasma membrane, following exocytosis, functions as a symporter of Na(+) and phosphate from the extracellular space to the cytoplasm allowing synaptic phosphate homeostasis regulation. The symporter activity is driven by an inside negative membrane potential and is electrogenic. Also involved in the regulation of retinal hyaloid vessel regression during postnatal development. May also play a role in the endocrine glutamatergic system of other tissues such as pineal gland and pancreas. The chain is Vesicular glutamate transporter 2 from Mus musculus (Mouse).